The chain runs to 216 residues: Early E3 25 kDa glycoprotein (216 aa).

N-linked (GlcNAc...) asparagine; by host glycosylation is found at asparagine 25, asparagine 82, asparagine 97, asparagine 109, asparagine 142, asparagine 147, and asparagine 160.

The polypeptide is Early E3 25 kDa glycoprotein (Canis lupus familiaris (Dog)).